The following is a 591-amino-acid chain: V-type ATP synthase alpha chain (591 aa).

Glycine 242–threonine 249 serves as a coordination point for ATP.

Belongs to the ATPase alpha/beta chains family.

It carries out the reaction ATP + H2O + 4 H(+)(in) = ADP + phosphate + 5 H(+)(out). Its function is as follows. Produces ATP from ADP in the presence of a proton gradient across the membrane. The V-type alpha chain is a catalytic subunit. The chain is V-type ATP synthase alpha chain from Chlamydia abortus (strain DSM 27085 / S26/3) (Chlamydophila abortus).